Reading from the N-terminus, the 237-residue chain is UDP-2,3-diacylglucosamine hydrolase (237 aa).

5 residues coordinate Mn(2+): Asp9, His11, Asp42, Asn80, and His115. 80-81 (NR) serves as a coordination point for substrate. Residues Asp123, Ser161, Lys165, Lys168, and His196 each contribute to the substrate site. Positions 196 and 198 each coordinate Mn(2+).

The protein belongs to the LpxH family. The cofactor is Mn(2+).

The protein localises to the cell inner membrane. The enzyme catalyses UDP-2-N,3-O-bis[(3R)-3-hydroxytetradecanoyl]-alpha-D-glucosamine + H2O = 2-N,3-O-bis[(3R)-3-hydroxytetradecanoyl]-alpha-D-glucosaminyl 1-phosphate + UMP + 2 H(+). Its pathway is glycolipid biosynthesis; lipid IV(A) biosynthesis; lipid IV(A) from (3R)-3-hydroxytetradecanoyl-[acyl-carrier-protein] and UDP-N-acetyl-alpha-D-glucosamine: step 4/6. Hydrolyzes the pyrophosphate bond of UDP-2,3-diacylglucosamine to yield 2,3-diacylglucosamine 1-phosphate (lipid X) and UMP by catalyzing the attack of water at the alpha-P atom. Involved in the biosynthesis of lipid A, a phosphorylated glycolipid that anchors the lipopolysaccharide to the outer membrane of the cell. The polypeptide is UDP-2,3-diacylglucosamine hydrolase (Haemophilus influenzae (strain PittGG)).